We begin with the raw amino-acid sequence, 1046 residues long: MSTDKLLLPNGVKSDGVIRMTRADAAAAAASSSLGGGSQIFDELPKAAIVSVSRPDTTDFSPLLLSYTLELQYKQFKWTLQKKASQVLYLHFALKKRLIIEELHDKQEQVREWLHSLGIFDMQGSVVQDDEEPDDGALPLHYTEDSIKNRNVPSRAALPIIRPTIGRSETVVDRGRTAMQGYLSLFLGNLDIVNSKEVCKFLEVSRLSFAREYGSKMKEGYVTVKHLRDVPGSDGVRCCLPTHCLGFFGTSWTKVWAVLKPGFLALLEDPFSGKLLDIMVFDTLGLQGTKESSEQPRLAEQVKEHNPLRFGFKVTSGDRTVRLRTTSSRKVKEWVKAVDEAGCYSPHRFGSFAPPRGLTSDGSQAQWFVDGHTAFEAIAFAIQNATSEIFMTGWWLCPELYLKRPFEDHPSLRLDALLETKAKQGVKIYILLYKEVQIALKINSLYSKKRLQNIHKNVKVLRYPDHLSSGIYLWSHHEKIVIVDYQVCFIGGLDLCFGRYDTAEHKIGDCPPYIWPGKDYYNPRESEPNSWEETMKDELDRRKYPRMPWHDVHCALWGPPCRDVARHFVQRWNHSKRNKAPNEQTIPLLMPHHHMVLPHYLGTREIDIIAAAKPEEDPDKPVVLARHDSFSSASPPQEIPLLLPQETDADFAGRGDLKLDSGARQDPGETSEESDLDEAVNDWWWQIGKQSDCRCQIIRSVSQWSAGTSQPEDSIHRAYCSLIQNAEHFIYIENQFFISGLEKEDTILNRVLEALYRRILKAHEENKCFRVVIVIPLLPGFQGGIDDFGAATVRALMHWQYRTISREGTSILDNLNALLGPKTQDYISFYGLRSYGRLFEDGPIATSQIYVHSKLMIVDDRIAVIGSSNINDRSLLGSRDSEIGVVIEDKEFVESSMNGMKWMAGKFSYSLRCSLWSEHLGLHAGEIQKIEDPIKDATYKDLWMATAKKNTDIYNQVFSCIPNEHIRSRAALRHNMALCKDKLGHTTIDLGIAPERLESCGSDSWEILKETRGNLVCFPLQFMCDQEDLRPGFNESEFYTAPQVFH.

The PX domain maps to 45–205 (PKAAIVSVSR…KEVCKFLEVS (161 aa)). A PH domain is found at 215-343 (SKMKEGYVTV…WVKAVDEAGC (129 aa)). Residues 472 to 499 (YLWSHHEKIVIVDYQVCFIGGLDLCFGR) form the PLD phosphodiesterase 1 domain. Catalysis depends on residues histidine 477, lysine 479, and aspartate 484. The segment covering 653–667 (GRGDLKLDSGARQDP) has biased composition (basic and acidic residues). Residues 653–677 (GRGDLKLDSGARQDPGETSEESDLD) form a disordered region. A PLD phosphodiesterase 2 domain is found at 847–874 (SQIYVHSKLMIVDDRIAVIGSSNINDRS). Catalysis depends on residues histidine 852, lysine 854, and aspartate 859.

Belongs to the phospholipase D family. PXPH-PLD subfamily. Requires Does not require Ca(2+) or any other cation for activity. as cofactor. In terms of tissue distribution, expressed in seedlings, roots, leaves, stems and flowers. Highest expression in roots. Detected only in the meristematic regions up to 4 days after germination and then at later stages in all tissues.

The catalysed reaction is a 1,2-diacyl-sn-glycero-3-phosphocholine + H2O = a 1,2-diacyl-sn-glycero-3-phosphate + choline + H(+). Hydrolyzes glycerol-phospholipids at the terminal phosphodiesteric bond to generate phosphatidic acids (PA). Phosphatidylcholine-selective. Regulates vesicle trafficking and auxin responses. Required for the normal cycling of PIN-2 containing vesicles. Contributes to the supply of inorganic phosphorus for cell metabolism and diacylglycerol moieties for galactolipid synthesis in phosphorus-starved roots. Involved in root elongation during phosphate limitation. The sequence is that of Phospholipase D zeta 2 from Arabidopsis thaliana (Mouse-ear cress).